The primary structure comprises 591 residues: 5'-nucleotidase domain-containing protein DDB_G0275467 (591 aa).

2 stretches are compositionally biased toward low complexity: residues 38-50 (STTTTSGIKSYST) and 68-78 (QHQQQQPQQHQ). The tract at residues 38 to 88 (STTTTSGIKSYSTHNRSNNDTHTSKSNTIDQHQQQQPQQHQNNDNKHLFTP) is disordered. Asp-165 functions as the Nucleophile in the catalytic mechanism. The Mg(2+) site is built by Asp-165 and Asp-167. Catalysis depends on Asp-167, which acts as the Proton donor. Position 305 to 313 (305 to 313 (TAAVGKVHL)) interacts with substrate. Asp-450 lines the Mg(2+) pocket.

This sequence belongs to the 5'(3')-deoxyribonucleotidase family. It depends on Mg(2+) as a cofactor.

The protein is 5'-nucleotidase domain-containing protein DDB_G0275467 of Dictyostelium discoideum (Social amoeba).